Consider the following 339-residue polypeptide: DNA-directed RNA polymerase subunit alpha (339 aa).

Residues 1–234 (MIEKNWQELI…DQFQIFINFE (234 aa)) form an alpha N-terminal domain (alpha-NTD) region. The alpha C-terminal domain (alpha-CTD) stretch occupies residues 251-339 (FNPALLRKVD…DLAKRFEDHV (89 aa)).

It belongs to the RNA polymerase alpha chain family. Homodimer. The RNAP catalytic core consists of 2 alpha, 1 beta, 1 beta' and 1 omega subunit. When a sigma factor is associated with the core the holoenzyme is formed, which can initiate transcription.

It carries out the reaction RNA(n) + a ribonucleoside 5'-triphosphate = RNA(n+1) + diphosphate. In terms of biological role, DNA-dependent RNA polymerase catalyzes the transcription of DNA into RNA using the four ribonucleoside triphosphates as substrates. This Maricaulis maris (strain MCS10) (Caulobacter maris) protein is DNA-directed RNA polymerase subunit alpha.